The following is a 346-amino-acid chain: Peripherin-2 (346 aa).

Residues 1 to 24 lie on the Cytoplasmic side of the membrane; the sequence is MALLKVKFDQKKRVKLAQGLWLMN. Residues 25–43 form a helical membrane-spanning segment; it reads WLSVLAGIVIFSLGLFLKI. The Lumenal portion of the chain corresponds to 44-61; sequence ELRKRSDVMNNSESHFVP. Residue Asn53 is glycosylated (N-linked (GlcNAc...) asparagine). The helical transmembrane segment at 62 to 80 threads the bilayer; sequence NSLIGMGVLSCVFNSLAGK. The Cytoplasmic portion of the chain corresponds to 81-99; sequence ICYDALDPSKYAKWKPWLK. A helical transmembrane segment spans residues 100 to 123; sequence SYLVVCVLFNIVLFLVALCCFLMR. The Lumenal portion of the chain corresponds to 124–264; that stretch reads GSLESTLAQG…LSYYGSLMNS (141 aa). Residue Asn229 is glycosylated (N-linked (GlcNAc...) asparagine). A helical membrane pass occupies residues 265–290; the sequence is MGAVTLLVWLFEVSITIGLRYLHTAL. Residues 291-346 are Cytoplasmic-facing; that stretch reads EGVSNPEDLECESEGWLLEKSVSETWKAFLESLKKLGKSNQVEAEGADAGQAPEAG. The tract at residues 341–346 is interaction with MREG; sequence QAPEAG.

This sequence belongs to the PRPH2/ROM1 family. In terms of assembly, homodimer; disulfide-linked. Forms a homotetramer. Forms a heterotetramer with ROM1. Homotetramer and heterotetramer core complexes go on to form higher order complexes by formation of intermolecular disulfide bonds. Interacts with MREG. Interacts with STX3. Interacts with SNAP25. As to expression, retina (photoreceptor). In rim region of ROS (rod outer segment) disks.

The protein resides in the membrane. Its subcellular location is the cell projection. It localises to the cilium. The protein localises to the photoreceptor outer segment. It is found in the photoreceptor inner segment. Its function is as follows. Essential for retina photoreceptor outer segment disk morphogenesis, may also play a role with ROM1 in the maintenance of outer segment disk structure. Required for the maintenance of retinal outer nuclear layer thickness. Required for the correct development and organization of the photoreceptor inner segment. The sequence is that of Peripherin-2 (PRPH2) from Felis catus (Cat).